The chain runs to 471 residues: Iroquois-class homeodomain protein IRX-2 (471 aa).

The segment at residues 112 to 175 (LNDPAYRKNA…ANARRRLKKE (64 aa)) is a DNA-binding region (homeobox; TALE-type). 2 disordered regions span residues 176–373 (NKMT…SPYP) and 424–471 (APKA…QPYL). Ser186 carries the phosphoserine modification. The segment covering 195–209 (DATRSKDESPDKAQE) has biased composition (basic and acidic residues). Over residues 261–273 (DDLEDDEDDDEEG) the composition is skewed to acidic residues. The segment covering 355–367 (PAAAAPASTGAPP) has biased composition (low complexity). The span at 462–471 (VVGGGVQPYL) shows a compositional bias: gly residues.

The protein belongs to the TALE/IRO homeobox family.

Its subcellular location is the nucleus. The chain is Iroquois-class homeodomain protein IRX-2 (IRX2) from Homo sapiens (Human).